The primary structure comprises 299 residues: Zinc finger protein 414 (299 aa).

Polar residues-rich tracts occupy residues 1-20 (MEEP…SSSG) and 69-81 (DSCQ…TGVG). The interval 1-98 (MEEPSRPSSD…PRRRPPPGKQ (98 aa)) is disordered. C2H2-type zinc fingers lie at residues 99 to 123 (IPCS…LRTH) and 135 to 159 (FRCS…GKLH). The C2H2-type 3; degenerate zinc-finger motif lies at 166 to 190 (FKCENCLLRFRTHRSLFKHLHVCID). Disordered stretches follow at residues 193-228 (QNPA…PFPL) and 254-299 (PRLR…GACR). Residues 203–215 (LDKEPPVPERPPE) show a composition bias toward basic and acidic residues. Over residues 217 to 228 (DPSSSLGLPFPL) the composition is skewed to low complexity.

The protein belongs to the krueppel C2H2-type zinc-finger protein family.

It is found in the nucleus. Its function is as follows. May be involved in transcriptional regulation. The protein is Zinc finger protein 414 (Znf414) of Mus musculus (Mouse).